A 101-amino-acid chain; its full sequence is NAD(P)H-quinone oxidoreductase subunit 4L, chloroplastic (101 aa).

The next 2 helical transmembrane spans lie at 2–22 (MFEH…YGLI) and 61–81 (IFSI…LAIV).

This sequence belongs to the complex I subunit 4L family. NDH is composed of at least 16 different subunits, 5 of which are encoded in the nucleus.

It localises to the plastid. Its subcellular location is the chloroplast thylakoid membrane. The enzyme catalyses a plastoquinone + NADH + (n+1) H(+)(in) = a plastoquinol + NAD(+) + n H(+)(out). The catalysed reaction is a plastoquinone + NADPH + (n+1) H(+)(in) = a plastoquinol + NADP(+) + n H(+)(out). Functionally, NDH shuttles electrons from NAD(P)H:plastoquinone, via FMN and iron-sulfur (Fe-S) centers, to quinones in the photosynthetic chain and possibly in a chloroplast respiratory chain. The immediate electron acceptor for the enzyme in this species is believed to be plastoquinone. Couples the redox reaction to proton translocation, and thus conserves the redox energy in a proton gradient. The protein is NAD(P)H-quinone oxidoreductase subunit 4L, chloroplastic of Dioscorea elephantipes (Elephant's foot yam).